Reading from the N-terminus, the 296-residue chain is Probable porphobilinogen deaminase (296 aa).

The residue at position 241 (cysteine 241) is an S-(dipyrrolylmethanemethyl)cysteine.

The protein belongs to the HMBS family. It depends on dipyrromethane as a cofactor.

The catalysed reaction is 4 porphobilinogen + H2O = hydroxymethylbilane + 4 NH4(+). Its pathway is porphyrin-containing compound metabolism; protoporphyrin-IX biosynthesis; coproporphyrinogen-III from 5-aminolevulinate: step 2/4. Its function is as follows. Tetrapolymerization of the monopyrrole PBG into the hydroxymethylbilane pre-uroporphyrinogen in several discrete steps. In Pyrobaculum calidifontis (strain DSM 21063 / JCM 11548 / VA1), this protein is Probable porphobilinogen deaminase.